The following is a 109-amino-acid chain: Iron-sulfur cluster assembly protein CyaY (109 aa).

This sequence belongs to the frataxin family.

Functionally, involved in iron-sulfur (Fe-S) cluster assembly. May act as a regulator of Fe-S biogenesis. In Bordetella avium (strain 197N), this protein is Iron-sulfur cluster assembly protein CyaY.